The primary structure comprises 83 residues: Small ribosomal subunit protein bS16 (83 aa).

Belongs to the bacterial ribosomal protein bS16 family.

This is Small ribosomal subunit protein bS16 from Thermosynechococcus vestitus (strain NIES-2133 / IAM M-273 / BP-1).